Consider the following 176-residue polypeptide: Ribosome maturation factor RimM (176 aa).

Residues 94–176 (KDEFFYFEIL…RFGFEILQNS (83 aa)) form the PRC barrel domain.

The protein belongs to the RimM family. In terms of assembly, binds ribosomal protein uS19.

The protein localises to the cytoplasm. Its function is as follows. An accessory protein needed during the final step in the assembly of 30S ribosomal subunit, possibly for assembly of the head region. Essential for efficient processing of 16S rRNA. May be needed both before and after RbfA during the maturation of 16S rRNA. It has affinity for free ribosomal 30S subunits but not for 70S ribosomes. The polypeptide is Ribosome maturation factor RimM (Campylobacter hominis (strain ATCC BAA-381 / DSM 21671 / CCUG 45161 / LMG 19568 / NCTC 13146 / CH001A)).